A 234-amino-acid polypeptide reads, in one-letter code: Nuclear transcription factor Y subunit B-6 (234 aa).

2 disordered regions span residues 1–21 (MERG…TPSP) and 35–55 (MRPP…EECT). Residues 63 to 69 (MPIANVI) mediate DNA binding. The segment at 90-101 (IQECVSEYISFI) is subunit association domain (SAD). A disordered region spans residues 206–234 (NEPNSKMSGSSSGASGARVEVFPTQQHKY). Low complexity predominate over residues 213–222 (SGSSSGASGA).

It belongs to the NFYB/HAP3 subunit family. As to quaternary structure, heterotrimeric transcription factor composed of three components, NF-YA, NF-YB and NF-YC. NF-YB and NF-YC must interact and dimerize for NF-YA association and DNA binding. Interacts with PRN1. Binds directly with DPB3-1. As to expression, expressed in roots, flowers and developing siliques. Present in etiolated seedlings.

It is found in the nucleus. Functionally, component of the NF-Y/HAP transcription factor complex. The NF-Y complex stimulates the transcription of various genes by recognizing and binding to a CCAAT motif in promoters. Plays a role in the regulation of the embryogenesis. Involved in the abscisic acid (ABA) signaling pathway. This is Nuclear transcription factor Y subunit B-6 from Arabidopsis thaliana (Mouse-ear cress).